Reading from the N-terminus, the 1004-residue chain is Importin subunit beta-5 (1004 aa).

Residue Met-1 is modified to N-acetylmethionine. The Importin N-terminal domain maps to 21 to 100; that stretch reads AETQLLQWCD…REVLLKLCLN (80 aa).

The protein belongs to the importin beta family. Interacts with NAP1.

It is found in the cytoplasm. It localises to the nucleus. The protein resides in the nuclear pore complex. Its function is as follows. Required for nuclear protein import and mediates docking of import substrate to distinct nucleoporins. Serves a receptor for nuclear localization signals. Mediates the nuclear import of TATA-binding protein (TBP) and of histones H2A and H2B. The chain is Importin subunit beta-5 (KAP114) from Saccharomyces cerevisiae (strain ATCC 204508 / S288c) (Baker's yeast).